The chain runs to 585 residues: Arginine--tRNA ligase (585 aa).

The short motif at Ala-131 to His-141 is the 'HIGH' region element.

It belongs to the class-I aminoacyl-tRNA synthetase family. In terms of assembly, monomer.

It localises to the cytoplasm. The catalysed reaction is tRNA(Arg) + L-arginine + ATP = L-arginyl-tRNA(Arg) + AMP + diphosphate. The chain is Arginine--tRNA ligase from Chelativorans sp. (strain BNC1).